The following is a 283-amino-acid chain: Diaminopimelate epimerase (283 aa).

Substrate contacts are provided by Asn-13, Gln-45, and Asn-65. The active-site Proton donor is the Cys-74. Substrate contacts are provided by residues 75-76 (GN), Asn-156, Asn-190, and 208-209 (ER). Cys-217 serves as the catalytic Proton acceptor. 218–219 (GS) contributes to the substrate binding site.

The protein belongs to the diaminopimelate epimerase family. Homodimer.

It localises to the cytoplasm. The catalysed reaction is (2S,6S)-2,6-diaminopimelate = meso-2,6-diaminopimelate. Its pathway is amino-acid biosynthesis; L-lysine biosynthesis via DAP pathway; DL-2,6-diaminopimelate from LL-2,6-diaminopimelate: step 1/1. Functionally, catalyzes the stereoinversion of LL-2,6-diaminopimelate (L,L-DAP) to meso-diaminopimelate (meso-DAP), a precursor of L-lysine and an essential component of the bacterial peptidoglycan. In Bartonella henselae (strain ATCC 49882 / DSM 28221 / CCUG 30454 / Houston 1) (Rochalimaea henselae), this protein is Diaminopimelate epimerase.